Consider the following 285-residue polypeptide: Golgi to ER traffic protein 2 (285 aa).

Positions 1 to 10 (MSELTEAEKR) are enriched in basic and acidic residues. Disordered regions lie at residues 1–72 (MSEL…KEDS) and 87–106 (MQGQ…PDLL). Position 2 is an N-acetylserine (Ser-2). At 2 to 148 (SELTEAEKRR…LDYHDYLLNR (147 aa)) the chain is on the cytoplasmic side. Residues 11-20 (RLLRERRQKK) are compositionally biased toward basic residues. The span at 24–42 (GGASSRLNKITGQASSHLN) shows a compositional bias: polar residues. Ser-45 bears the Phosphoserine mark. Over residues 49 to 60 (APSAAKTTPPAS) the composition is skewed to low complexity. The span at 93 to 104 (GKSTPQDSSTPD) shows a compositional bias: polar residues. Residues 149–169 (LKAWTILVKWVFFLLPYLYLI) traverse the membrane as a helical segment. Residues 170-196 (TRPNSSVWPAYAFTQSAWFAPLRNPSN) are Lumenal-facing. N-linked (GlcNAc...) asparagine glycosylation is found at Asn-173 and Asn-196. Residues 197 to 216 (FTRIFATFEFLSISIYYQLL) traverse the membrane as a helical segment. Topologically, residues 217-263 (KNVEHKSKIKNLQDTNKLVKLVSLVPEGVIPVANLKGKLITLLQYWD) are cytoplasmic. Residues 264 to 284 (LLSMLITDISFVLIVLGLLTY) traverse the membrane as a helical segment. A topological domain (lumenal) is located at residue Leu-285.

It belongs to the GET2 family. Component of the Golgi to ER traffic (GET) complex, which is composed of GET1, GET2 and GET3. Within the complex, GET1 and GET2 form a heterotetramer which is stabilized by phosphatidylinositol binding and which binds to the GET3 homodimer.

The protein localises to the endoplasmic reticulum membrane. The protein resides in the golgi apparatus membrane. Required for the post-translational delivery of tail-anchored (TA) proteins to the endoplasmic reticulum. Together with GET1, acts as a membrane receptor for soluble GET3, which recognizes and selectively binds the transmembrane domain of TA proteins in the cytosol. The GET complex cooperates with the HDEL receptor ERD2 to mediate the ATP-dependent retrieval of resident ER proteins that contain a C-terminal H-D-E-L retention signal from the Golgi to the ER. Involved in DNA replication and DNA damage response and also in cell wall function. The sequence is that of Golgi to ER traffic protein 2 from Saccharomyces cerevisiae (strain RM11-1a) (Baker's yeast).